The following is a 634-amino-acid chain: Mediator of RNA polymerase II transcription subunit 17 (634 aa).

2 disordered regions span residues 51-73 (DKHK…DVDT) and 606-626 (DEKA…GSPG). Residues 611–623 (RAQSWKPDSTTPG) are compositionally biased toward polar residues.

It belongs to the Mediator complex subunit 17 family. In terms of assembly, component of the Mediator complex.

It is found in the nucleus. Functionally, component of the Mediator complex, a coactivator involved in the regulated transcription of nearly all RNA polymerase II-dependent genes. Mediator functions as a bridge to convey information from gene-specific regulatory proteins to the basal RNA polymerase II transcription machinery. Mediator is recruited to promoters by direct interactions with regulatory proteins and serves as a scaffold for the assembly of a functional preinitiation complex with RNA polymerase II and the general transcription factors. This is Mediator of RNA polymerase II transcription subunit 17 (srb4) from Aspergillus terreus (strain NIH 2624 / FGSC A1156).